Here is a 211-residue protein sequence, read N- to C-terminus: Small ribosomal subunit protein uS3 (211 aa).

The region spanning 38-106 is the KH type-2 domain; sequence LRKFIKKAFY…NIELNIIEVK (69 aa).

Belongs to the universal ribosomal protein uS3 family. Part of the 30S ribosomal subunit. Forms a tight complex with proteins S10 and S14.

Functionally, binds the lower part of the 30S subunit head. Binds mRNA in the 70S ribosome, positioning it for translation. The sequence is that of Small ribosomal subunit protein uS3 from Ehrlichia ruminantium (strain Welgevonden).